A 474-amino-acid polypeptide reads, in one-letter code: Bifunctional protein HldE (474 aa).

The segment at 1–318 (MKLSMPRFDQ…RAIQREEGSE (318 aa)) is ribokinase. ATP is bound at residue 194–197 (NLSE). The active site involves Asp-263. The interval 343-474 (FTNGCFDILH…AIVEKIRKSE (132 aa)) is cytidylyltransferase.

The protein in the N-terminal section; belongs to the carbohydrate kinase PfkB family. In the C-terminal section; belongs to the cytidylyltransferase family. As to quaternary structure, homodimer.

It catalyses the reaction D-glycero-beta-D-manno-heptose 7-phosphate + ATP = D-glycero-beta-D-manno-heptose 1,7-bisphosphate + ADP + H(+). It carries out the reaction D-glycero-beta-D-manno-heptose 1-phosphate + ATP + H(+) = ADP-D-glycero-beta-D-manno-heptose + diphosphate. The protein operates within nucleotide-sugar biosynthesis; ADP-L-glycero-beta-D-manno-heptose biosynthesis; ADP-L-glycero-beta-D-manno-heptose from D-glycero-beta-D-manno-heptose 7-phosphate: step 1/4. It functions in the pathway nucleotide-sugar biosynthesis; ADP-L-glycero-beta-D-manno-heptose biosynthesis; ADP-L-glycero-beta-D-manno-heptose from D-glycero-beta-D-manno-heptose 7-phosphate: step 3/4. Its function is as follows. Catalyzes the phosphorylation of D-glycero-D-manno-heptose 7-phosphate at the C-1 position to selectively form D-glycero-beta-D-manno-heptose-1,7-bisphosphate. Functionally, catalyzes the ADP transfer from ATP to D-glycero-beta-D-manno-heptose 1-phosphate, yielding ADP-D-glycero-beta-D-manno-heptose. The chain is Bifunctional protein HldE from Pseudomonas fluorescens (strain Pf0-1).